The primary structure comprises 538 residues: Chaperonin GroEL (538 aa).

ATP is bound by residues 29–32 (TIGP), 86–90 (DGTTT), Gly413, 476–478 (NAA), and Asp492.

The protein belongs to the chaperonin (HSP60) family. As to quaternary structure, forms a cylinder of 14 subunits composed of two heptameric rings stacked back-to-back. Interacts with the co-chaperonin GroES.

Its subcellular location is the cytoplasm. The enzyme catalyses ATP + H2O + a folded polypeptide = ADP + phosphate + an unfolded polypeptide.. Together with its co-chaperonin GroES, plays an essential role in assisting protein folding. The GroEL-GroES system forms a nano-cage that allows encapsulation of the non-native substrate proteins and provides a physical environment optimized to promote and accelerate protein folding. The protein is Chaperonin GroEL of Staphylococcus aureus (strain USA300).